The sequence spans 126 residues: Fatty acid-binding protein 2, liver (126 aa).

Cholate contacts are provided by residues 54-56 (TPN), 99-101 (HIQ), and Arg-121.

The protein belongs to the calycin superfamily. Fatty-acid binding protein (FABP) family.

Its subcellular location is the cytoplasm. Functionally, binds free fatty acids and their coenzyme A derivatives, bilirubin, and some other small molecules in the cytoplasm. May be involved in intracellular lipid transport. The specificity of axolotl L-FABP differs from that of LB-FABP. Binds 2 ligands per protein molecule. This is Fatty acid-binding protein 2, liver from Ambystoma mexicanum (Axolotl).